Consider the following 317-residue polypeptide: Transmembrane and death domain protein 1 (317 aa).

Positions 1–27 (MAARTLASALVLTLWVWALAPAGAVDA) are cleaved as a signal peptide. Residues 28–218 (MGPHAAVRLA…ERSPMGWAGP (191 aa)) are Extracellular-facing. Residues 62 to 73 (ELSRLSEDRLAR) show a composition bias toward basic and acidic residues. The segment at 62 to 106 (ELSRLSEDRLARPEPLNTTSGSPSRRRRREAAEDPAGRVAGPGEV) is disordered. Residues 66-150 (LSEDRLARPE…DVARELGKNL (85 aa)) form the Death domain. A glycan (N-linked (GlcNAc...) asparagine) is linked at asparagine 78. The helical transmembrane segment at 219 to 239 (LALGLLTGFVGALGTGALVVL) threads the bilayer. Topologically, residues 240-317 (LTLWITGGDG…SWGSGALDGL (78 aa)) are cytoplasmic.

The protein resides in the membrane. This chain is Transmembrane and death domain protein 1, found in Homo sapiens (Human).